Here is a 114-residue protein sequence, read N- to C-terminus: Abscisic stress-ripening protein 2 (114 aa).

2 disordered regions span residues 1–25 and 88–114; these read MAEE…GGPV and FHEH…HHHY. Residues 7–16 are compositionally biased toward basic residues; that stretch reads QHHHHLFHHK. A compositionally biased stretch (basic and acidic residues) spans 97 to 107; that stretch reads AKKEKKEVEGG.

It belongs to the abscisic acid and water stress-induced protein family.

The sequence is that of Abscisic stress-ripening protein 2 from Solanum lycopersicum (Tomato).